Here is a 621-residue protein sequence, read N- to C-terminus: MYDIIVAGAGHAGCEAALAAARSGSSCLLISSDLTAVARMSCNPAIGGVAKGQITREIDALGGEMAKAIDATGIQFRMLNLSKGPAMHSPRAQADRTAYTEYMKRVLEAETNLDLLQDTVTGIEVRGGQFFGVELQSGRILRAGAAILTCGTFLNGLIHIGMNHFPGGRTIAEPPVTGLTESLVAAGFTTARLKTGTPPRVDRRSIDYSIVIEQKGDENPPPFSFSSGSIAGKEQISCFLTKTTHKTHEILRTGFDRSPLFSGKVQGVGPRYCPSIEDKIHRFTERDSHHIFLEPEGFHTNEMYVNGFSTSLPEDIQIAGLQSIPGMEEVKMIRPGYAIEYDYFHPSQIRRSLETKAVENLYFAGQINGTSGYEEAAAQGLMAGINASRKLKELPPIHLQRSDAYIGVLIDDLVTKETNEPYRMFTSSAEHRLILRHDNADLRLRKFGHTAGLVDDDTYRETLSKDDEIVRMTAFLRSKTIPTTALYNLLPAESNRPMTGGQKAASALKRPGITLNRLFAALPDFAKEARLISSNPLVHEQVEINLAYEGYLKRELLQTEKVARLESLILPETFNYHSVTGLSSEGREKLLHFRPETLGQASRIMGVSPSDISVLMVRLGR.

8–13 (GAGHAG) lines the FAD pocket. Residue 269-283 (GPRYCPSIEDKIHRF) participates in NAD(+) binding.

It belongs to the MnmG family. In terms of assembly, homodimer. Heterotetramer of two MnmE and two MnmG subunits. FAD serves as cofactor.

It localises to the cytoplasm. NAD-binding protein involved in the addition of a carboxymethylaminomethyl (cmnm) group at the wobble position (U34) of certain tRNAs, forming tRNA-cmnm(5)s(2)U34. The sequence is that of tRNA uridine 5-carboxymethylaminomethyl modification enzyme MnmG from Chlorobium phaeovibrioides (strain DSM 265 / 1930) (Prosthecochloris vibrioformis (strain DSM 265)).